The primary structure comprises 673 residues: Zinc finger protein 16 (673 aa).

A compositionally biased stretch (basic and acidic residues) spans 1 to 10; sequence MPSLRTRREE. The disordered stretch occupies residues 1–42; that stretch reads MPSLRTRREEAEMELSAPGPSPWTPAPQARVSDAPAVTHPGS. Residues 62–210 form a necessary for transcription activation region; sequence YQQPDCDTRT…GVPTAESPLI (149 aa). The C2H2-type 1; degenerate zinc finger occupies 209 to 231; sequence LICNECGKTFRGNPDLIQRQIVH. Residues 237–259 form a C2H2-type 2; degenerate zinc finger; it reads FMCDDCGKTFSQNSVLKNRHXSH. A Glycyl lysine isopeptide (Lys-Gly) (interchain with G-Cter in SUMO2) cross-link involves residue Lys253. 7 consecutive C2H2-type zinc fingers follow at residues 284–306, 312–334, 340–362, 368–390, 396–418, 424–446, and 452–474; these read YTCT…QKSH, YECN…QRIH, YVCS…HRTH, FECG…QRVH, YECN…HRVH, YKCS…RRIH, and HVCN…QIIH. The tract at residues 332–364 is required for nuclear localization; that stretch reads RIHSGEKPYVCSECGKAFRRSSNLIKHHRTHTG. The required for nuclear localization stretch occupies residues 464 to 494; it reads SSVLRKHQIIHTGEKPYRCSVCGKAFSHSSA. Lys478 is subject to N6-acetyllysine. 7 consecutive C2H2-type zinc fingers follow at residues 480–502, 508–530, 536–558, 564–586, 592–614, 620–642, and 648–670; these read YRCS…QGVH, YACH…QRVH, YECT…QRIH, HECN…QKVH, YTCV…QIIH, YKCS…QRIH, and YDCA…QLIH.

It belongs to the krueppel C2H2-type zinc-finger protein family. In terms of assembly, interacts with INCA1; the interaction inhibits INCA1 activity and induces the cell cycle process.

The protein resides in the nucleus. Acts as a transcriptional activator. Promotes cell proliferation by facilitating the cell cycle phase transition from the S to G2/M phase. Involved in both the hemin- and phorbol myristate acetate (PMA)-induced erythroid and megakaryocytic differentiation, respectively. Also plays a role as an inhibitor of cell apoptosis. This is Zinc finger protein 16 (ZNF16) from Pan paniscus (Pygmy chimpanzee).